The chain runs to 349 residues: 4-hydroxy-tetrahydrodipicolinate reductase 2, chloroplastic (349 aa).

The transit peptide at 1–53 directs the protein to the chloroplast; the sequence is MAANGLMAASSVFLHRPVHPHFSFSSRTNQMVPLGFKGRVSFIGNVKRCFPVV. NAD(+)-binding positions include 81 to 86, 173 to 175, and 196 to 199; these read GCSGKM, GTT, and SPQM. Catalysis depends on His-232, which acts as the Proton donor/acceptor. The active-site Proton donor is Lys-236. 241-242 is a (S)-2,3,4,5-tetrahydrodipicolinate binding site; the sequence is GT.

It belongs to the DapB family.

Its subcellular location is the plastid. The protein localises to the chloroplast. It catalyses the reaction (S)-2,3,4,5-tetrahydrodipicolinate + NAD(+) + H2O = (2S,4S)-4-hydroxy-2,3,4,5-tetrahydrodipicolinate + NADH + H(+). The enzyme catalyses (S)-2,3,4,5-tetrahydrodipicolinate + NADP(+) + H2O = (2S,4S)-4-hydroxy-2,3,4,5-tetrahydrodipicolinate + NADPH + H(+). It participates in amino-acid biosynthesis; L-lysine biosynthesis via DAP pathway; (S)-tetrahydrodipicolinate from L-aspartate: step 4/4. Its function is as follows. Catalyzes the conversion of 4-hydroxy-tetrahydrodipicolinate (HTPA) to tetrahydrodipicolinate. In Arabidopsis thaliana (Mouse-ear cress), this protein is 4-hydroxy-tetrahydrodipicolinate reductase 2, chloroplastic (DAPB2).